The primary structure comprises 294 residues: 4-hydroxy-tetrahydrodipicolinate synthase (294 aa).

Thr-45 serves as a coordination point for pyruvate. The Proton donor/acceptor role is filled by Tyr-133. The Schiff-base intermediate with substrate role is filled by Lys-162. Ile-204 lines the pyruvate pocket.

The protein belongs to the DapA family. Homotetramer; dimer of dimers.

It localises to the cytoplasm. The catalysed reaction is L-aspartate 4-semialdehyde + pyruvate = (2S,4S)-4-hydroxy-2,3,4,5-tetrahydrodipicolinate + H2O + H(+). It functions in the pathway amino-acid biosynthesis; L-lysine biosynthesis via DAP pathway; (S)-tetrahydrodipicolinate from L-aspartate: step 3/4. Catalyzes the condensation of (S)-aspartate-beta-semialdehyde [(S)-ASA] and pyruvate to 4-hydroxy-tetrahydrodipicolinate (HTPA). This Rhizobium meliloti (strain 1021) (Ensifer meliloti) protein is 4-hydroxy-tetrahydrodipicolinate synthase.